We begin with the raw amino-acid sequence, 398 residues long: 4-hydroxy-3-methylbut-2-enyl diphosphate reductase (398 aa).

Cys-66 provides a ligand contact to [4Fe-4S] cluster. His-96 is a (2E)-4-hydroxy-3-methylbut-2-enyl diphosphate binding site. His-96 is a binding site for dimethylallyl diphosphate. His-96 contacts isopentenyl diphosphate. Residue Cys-157 participates in [4Fe-4S] cluster binding. His-185 provides a ligand contact to (2E)-4-hydroxy-3-methylbut-2-enyl diphosphate. His-185 provides a ligand contact to dimethylallyl diphosphate. His-185 provides a ligand contact to isopentenyl diphosphate. Glu-187 acts as the Proton donor in catalysis. Thr-250 is a (2E)-4-hydroxy-3-methylbut-2-enyl diphosphate binding site. Cys-288 contacts [4Fe-4S] cluster. The (2E)-4-hydroxy-3-methylbut-2-enyl diphosphate site is built by Ser-317, Ser-318, Asn-319, and Ser-380. Dimethylallyl diphosphate-binding residues include Ser-317, Ser-318, Asn-319, and Ser-380. Isopentenyl diphosphate is bound by residues Ser-317, Ser-318, Asn-319, and Ser-380.

The protein belongs to the IspH family. [4Fe-4S] cluster serves as cofactor.

It catalyses the reaction isopentenyl diphosphate + 2 oxidized [2Fe-2S]-[ferredoxin] + H2O = (2E)-4-hydroxy-3-methylbut-2-enyl diphosphate + 2 reduced [2Fe-2S]-[ferredoxin] + 2 H(+). The catalysed reaction is dimethylallyl diphosphate + 2 oxidized [2Fe-2S]-[ferredoxin] + H2O = (2E)-4-hydroxy-3-methylbut-2-enyl diphosphate + 2 reduced [2Fe-2S]-[ferredoxin] + 2 H(+). Its pathway is isoprenoid biosynthesis; dimethylallyl diphosphate biosynthesis; dimethylallyl diphosphate from (2E)-4-hydroxy-3-methylbutenyl diphosphate: step 1/1. It participates in isoprenoid biosynthesis; isopentenyl diphosphate biosynthesis via DXP pathway; isopentenyl diphosphate from 1-deoxy-D-xylulose 5-phosphate: step 6/6. Functionally, catalyzes the conversion of 1-hydroxy-2-methyl-2-(E)-butenyl 4-diphosphate (HMBPP) into a mixture of isopentenyl diphosphate (IPP) and dimethylallyl diphosphate (DMAPP). Acts in the terminal step of the DOXP/MEP pathway for isoprenoid precursor biosynthesis. This Prochlorococcus marinus (strain MIT 9515) protein is 4-hydroxy-3-methylbut-2-enyl diphosphate reductase.